The chain runs to 98 residues: Protein E7 (98 aa).

Residues 1 to 37 (MKGQNVTLQDIAIELEDTISPINLHCEEEIETEEVDT) are E7 terminal domain. Positions 24 to 28 (LHCEE) match the LXCXE motif; interaction with host RB1 and TMEM173/STING motif. A zinc finger lies at 47 to 83 (CYACEQVLRLAVVTSTEGIHQLQQLLFDNLFLLCAAC). Residues 65–73 (IHQLQQLLF) carry the Nuclear export signal motif.

Belongs to the papillomaviridae E7 protein family. Homodimer. Homooligomer. Interacts with host RB1; this interaction induces dissociation of RB1-E2F1 complex thereby disrupting RB1 activity. Interacts with host EP300; this interaction represses EP300 transcriptional activity. Interacts with protein E2; this interaction inhibits E7 oncogenic activity. Interacts with host TMEM173/STING; this interaction impairs the ability of TMEM173/STING to sense cytosolic DNA and promote the production of type I interferon (IFN-alpha and IFN-beta). Post-translationally, highly phosphorylated.

The protein resides in the host cytoplasm. It localises to the host nucleus. Plays a role in viral genome replication by driving entry of quiescent cells into the cell cycle. Stimulation of progression from G1 to S phase allows the virus to efficiently use the cellular DNA replicating machinery to achieve viral genome replication. E7 protein has both transforming and trans-activating activities. Induces the disassembly of the E2F1 transcription factor from RB1, with subsequent transcriptional activation of E2F1-regulated S-phase genes. Interferes with host histone deacetylation mediated by HDAC1 and HDAC2, leading to transcription activation. Also plays a role in the inhibition of both antiviral and antiproliferative functions of host interferon alpha. Interaction with host TMEM173/STING impairs the ability of TMEM173/STING to sense cytosolic DNA and promote the production of type I interferon (IFN-alpha and IFN-beta). The protein is Protein E7 of Bos taurus papillomavirus 4 (Bovine papillomavirus 4).